The sequence spans 568 residues: Serine/threonine-protein kinase WNK2 (568 aa).

A Protein kinase domain is found at 24–281; it reads GRYDEILGKG…ALELLQDPFL (258 aa). ATP contacts are provided by residues 104-107 and Lys154; that span reads TELF. The active-site Proton acceptor is Asp171. Residues 453 to 473 are disordered; sequence SSGEKSHHNHHEFDSSEDKSC. A compositionally biased stretch (basic and acidic residues) spans 463 to 472; the sequence is HEFDSSEDKS.

This sequence belongs to the protein kinase superfamily. Ser/Thr protein kinase family. WNK subfamily. Autophosphorylated.

The enzyme catalyses L-seryl-[protein] + ATP = O-phospho-L-seryl-[protein] + ADP + H(+). It carries out the reaction L-threonyl-[protein] + ATP = O-phospho-L-threonyl-[protein] + ADP + H(+). Its function is as follows. Regulates flowering time by modulating the photoperiod pathway. Possesses kinase activity in vitro. The polypeptide is Serine/threonine-protein kinase WNK2 (WNK2) (Arabidopsis thaliana (Mouse-ear cress)).